We begin with the raw amino-acid sequence, 653 residues long: Aspartate--tRNA ligase, mitochondrial (653 aa).

The transit peptide at 1–46 (MYLGFWLSRLCRGLSRPIGKTMRPIWGSLSRNLALSSQRIPEFSSF) directs the protein to the mitochondrion. Threonine 218 is subject to Phosphothreonine. The residue at position 241 (serine 241) is a Phosphoserine. Residues 243–246 (QQFK) are aspartate. Arginine 265 serves as a coordination point for L-aspartate. Residues 265-267 (RDE) and glutamate 534 contribute to the ATP site. Residue arginine 541 coordinates L-aspartate. 583–586 (GLDR) serves as a coordination point for ATP.

Belongs to the class-II aminoacyl-tRNA synthetase family. Type 1 subfamily. As to quaternary structure, homodimer.

It localises to the mitochondrion matrix. The protein localises to the mitochondrion membrane. The enzyme catalyses tRNA(Asp) + L-aspartate + ATP = L-aspartyl-tRNA(Asp) + AMP + diphosphate. Functionally, catalyzes the attachment of aspartate to tRNA(Asp) in a two-step reaction: aspartate is first activated by ATP to form Asp-AMP and then transferred to the acceptor end of tRNA(Asp). In Mus musculus (Mouse), this protein is Aspartate--tRNA ligase, mitochondrial (Dars2).